The primary structure comprises 562 residues: Exonuclease subunit 2 (562 aa).

36 to 43 contacts ATP; that stretch reads GKNGGGKS.

The protein to phage T5 protein D13 and to yeast RAD52. As to quaternary structure, consists of two subunits: Gp47 and Gp46.

Exonuclease involved in phage DNA recombination, replication, and repair. The chain is Exonuclease subunit 2 (46) from Escherichia phage RB69 (Bacteriophage RB69).